A 407-amino-acid polypeptide reads, in one-letter code: Cysteine desulfurase (407 aa).

At Lys226 the chain carries N6-(pyridoxal phosphate)lysine. Cys364 (cysteine persulfide intermediate) is an active-site residue.

This sequence belongs to the class-V pyridoxal-phosphate-dependent aminotransferase family. Csd subfamily. Homodimer. Interacts with SufE and the SufBCD complex composed of SufB, SufC and SufD. The interaction with SufE is required to mediate the direct transfer of the sulfur atom from the S-sulfanylcysteine. The cofactor is pyridoxal 5'-phosphate.

It localises to the cytoplasm. The enzyme catalyses (sulfur carrier)-H + L-cysteine = (sulfur carrier)-SH + L-alanine. It catalyses the reaction L-selenocysteine + AH2 = hydrogenselenide + L-alanine + A + H(+). It participates in cofactor biosynthesis; iron-sulfur cluster biosynthesis. Functionally, cysteine desulfurases mobilize the sulfur from L-cysteine to yield L-alanine, an essential step in sulfur metabolism for biosynthesis of a variety of sulfur-containing biomolecules. Component of the suf operon, which is activated and required under specific conditions such as oxidative stress and iron limitation. Acts as a potent selenocysteine lyase in vitro, that mobilizes selenium from L-selenocysteine. Selenocysteine lyase activity is however unsure in vivo. The chain is Cysteine desulfurase from Pectobacterium atrosepticum (strain SCRI 1043 / ATCC BAA-672) (Erwinia carotovora subsp. atroseptica).